A 162-amino-acid polypeptide reads, in one-letter code: Thy-1 membrane glycoprotein (162 aa).

The first 19 residues, 1–19, serve as a signal peptide directing secretion; it reads MNPAISVALLLSVLQVSRG. Q20 is modified (pyrrolidone carboxylic acid). The Ig-like V-type domain occupies 20 to 127; sequence QKVTSLTACL…NKSISVYRDK (108 aa). Disulfide bonds link C28–C131 and C38–C105. Residues N42, N94, and N118 are each glycosylated (N-linked (GlcNAc...) asparagine). Residue C131 is the site of GPI-anchor amidated cysteine; alternate attachment. A propeptide spans 132–162 (removed in mature form); the sequence is GGISLLVQNTSWMLLLLLSLSLLQALDFISL.

It localises to the cell membrane. Its function is as follows. May play a role in cell-cell or cell-ligand interactions during synaptogenesis and other events in the brain. The sequence is that of Thy-1 membrane glycoprotein (Thy1) from Mus musculus (Mouse).